The sequence spans 705 residues: 1,4-alpha-glucan branching enzyme GlgB (705 aa).

The Nucleophile role is filled by Asp-393. Glu-446 serves as the catalytic Proton donor.

Belongs to the glycosyl hydrolase 13 family. GlgB subfamily. Monomer.

It catalyses the reaction Transfers a segment of a (1-&gt;4)-alpha-D-glucan chain to a primary hydroxy group in a similar glucan chain.. It participates in glycan biosynthesis; glycogen biosynthesis. Its function is as follows. Catalyzes the formation of the alpha-1,6-glucosidic linkages in glycogen by scission of a 1,4-alpha-linked oligosaccharide from growing alpha-1,4-glucan chains and the subsequent attachment of the oligosaccharide to the alpha-1,6 position. The sequence is that of 1,4-alpha-glucan branching enzyme GlgB from Picrophilus torridus (strain ATCC 700027 / DSM 9790 / JCM 10055 / NBRC 100828 / KAW 2/3).